Reading from the N-terminus, the 396-residue chain is Elongation factor Tu (396 aa).

The region spanning 10-206 (KPHCNIGTIG…AVDSYIPQPE (197 aa)) is the tr-type G domain. The interval 19-26 (GHVDHGKT) is G1. 19–26 (GHVDHGKT) contributes to the GTP binding site. T26 is a Mg(2+) binding site. Residues 60 to 64 (GITIS) form a G2 region. Residues 81 to 84 (DCPG) form a G3 region. GTP contacts are provided by residues 81-85 (DCPGH) and 136-139 (NKCD). Positions 136-139 (NKCD) are G4. The G5 stretch occupies residues 174 to 176 (SAL).

Belongs to the TRAFAC class translation factor GTPase superfamily. Classic translation factor GTPase family. EF-Tu/EF-1A subfamily. As to quaternary structure, monomer.

The protein resides in the cytoplasm. It catalyses the reaction GTP + H2O = GDP + phosphate + H(+). In terms of biological role, GTP hydrolase that promotes the GTP-dependent binding of aminoacyl-tRNA to the A-site of ribosomes during protein biosynthesis. This is Elongation factor Tu from Rhodopseudomonas palustris (strain BisA53).